Consider the following 227-residue polypeptide: NADH-quinone oxidoreductase subunit C (227 aa).

It belongs to the complex I 30 kDa subunit family. NDH-1 is composed of 14 different subunits. Subunits NuoB, C, D, E, F, and G constitute the peripheral sector of the complex.

Its subcellular location is the cell inner membrane. It carries out the reaction a quinone + NADH + 5 H(+)(in) = a quinol + NAD(+) + 4 H(+)(out). Functionally, NDH-1 shuttles electrons from NADH, via FMN and iron-sulfur (Fe-S) centers, to quinones in the respiratory chain. The immediate electron acceptor for the enzyme in this species is believed to be ubiquinone. Couples the redox reaction to proton translocation (for every two electrons transferred, four hydrogen ions are translocated across the cytoplasmic membrane), and thus conserves the redox energy in a proton gradient. This Coxiella burnetii (strain RSA 331 / Henzerling II) protein is NADH-quinone oxidoreductase subunit C.